The following is a 691-amino-acid chain: MTDEPQSDEQQTTEQERPLGTKRATRADGLRRPGVRSGLAERRSPAADSVRNGAAAVRRFLLRDVFALGLMIAALVIVILFFTLLGATKPTSSGTGIPLSQVFTLARDRAIVEATLLDEDARVQVHTRDGAEYWAAYPSSGAQTATLSSALERGGAIVAVKQQPGKAQVTIVVQFLLPILLLVCLFALFMRIGQDGGAGGIASFSNFTGRGRKKGKGTAHRVTFADIAGVPEAVAELAEIRDYLDDPSRYLDLGAAAPKGVLLVGPPGTGKTLLAKAVAGEADAAFFSLSGSDFVESLVGVGAARVRDLFAKARRMSPAIIFIDEFDAAGRKRGAGIGQGNDEREQTLNQLLVEMDGFSGDGGLVVMGATNRPDILDPALLRPGRFDRQITVDTPDVHGRSEILRLHGSKRPMAPDADLDEIARLTPGFSGAELANVVNEAALLTVRGGRREISQKLLEESIDRVVAGPAKKHLLTERERWIISIHESSHAVVTEAMGTGATARKVSIVARGRSLGTAAHMLTDRDQTIMEEPDLVMQLIAMLAGAAGERIEFGHLSTGVHDDLHEATSLARSMVTSFGMSDELGPVTIGEKSGEVFLGASLQDLGAVGPKTLDLIDDAVERLVKDAELVARAILRINIDAVHETAHALLEHETLSGVALEAVLSTVTTVEPEHFPELRERERGSARDRDA.

Residues 1–48 (MTDEPQSDEQQTTEQERPLGTKRATRADGLRRPGVRSGLAERRSPAAD) are disordered. The Cytoplasmic segment spans residues 1–64 (MTDEPQSDEQ…AAVRRFLLRD (64 aa)). A compositionally biased stretch (basic and acidic residues) spans 14-31 (EQERPLGTKRATRADGLR). The chain crosses the membrane as a helical span at residues 65–85 (VFALGLMIAALVIVILFFTLL). Over 86–168 (GATKPTSSGT…AVKQQPGKAQ (83 aa)) the chain is Extracellular. The chain crosses the membrane as a helical span at residues 169-189 (VTIVVQFLLPILLLVCLFALF). Over 190-691 (MRIGQDGGAG…ERGSARDRDA (502 aa)) the chain is Cytoplasmic. ATP is bound at residue 265–272 (GPPGTGKT). His-486 is a binding site for Zn(2+). Glu-487 is a catalytic residue. His-490 and Asp-563 together coordinate Zn(2+).

The protein in the central section; belongs to the AAA ATPase family. In the C-terminal section; belongs to the peptidase M41 family. In terms of assembly, homohexamer. Requires Zn(2+) as cofactor.

The protein resides in the cell membrane. Functionally, acts as a processive, ATP-dependent zinc metallopeptidase for both cytoplasmic and membrane proteins. Plays a role in the quality control of integral membrane proteins. The protein is ATP-dependent zinc metalloprotease FtsH 2 of Conexibacter woesei (strain DSM 14684 / CCUG 47730 / CIP 108061 / JCM 11494 / NBRC 100937 / ID131577).